A 389-amino-acid polypeptide reads, in one-letter code: Probable L-tyrosine/L-aspartate decarboxylase (389 aa).

Lys233 is modified (N6-(pyridoxal phosphate)lysine).

It belongs to the group II decarboxylase family. MfnA subfamily. Requires pyridoxal 5'-phosphate as cofactor.

The enzyme catalyses L-tyrosine + H(+) = tyramine + CO2. It catalyses the reaction L-aspartate + H(+) = beta-alanine + CO2. Its pathway is cofactor biosynthesis; methanofuran biosynthesis. It functions in the pathway cofactor biosynthesis; coenzyme A biosynthesis. In terms of biological role, catalyzes the decarboxylation of L-tyrosine to produce tyramine for methanofuran biosynthesis. Can also catalyze the decarboxylation of L-aspartate to produce beta-alanine for coenzyme A (CoA) biosynthesis. This chain is Probable L-tyrosine/L-aspartate decarboxylase, found in Methanosphaera stadtmanae (strain ATCC 43021 / DSM 3091 / JCM 11832 / MCB-3).